The chain runs to 447 residues: Argininosuccinate synthase (447 aa).

Residues 17–25 and alanine 43 contribute to the ATP site; that span reads AFSGGLDTS. An L-citrulline-binding site is contributed by tyrosine 99. Residues glycine 129 and threonine 131 each contribute to the ATP site. L-aspartate contacts are provided by threonine 131, asparagine 135, and aspartate 136. Residue asparagine 135 coordinates L-citrulline. Position 136 (aspartate 136) interacts with ATP. L-citrulline is bound by residues arginine 139 and serine 192. Aspartate 194 contributes to the ATP binding site. 3 residues coordinate L-citrulline: threonine 201, glutamate 203, and glutamate 280.

The protein belongs to the argininosuccinate synthase family. Type 2 subfamily. As to quaternary structure, homotetramer.

It localises to the cytoplasm. The catalysed reaction is L-citrulline + L-aspartate + ATP = 2-(N(omega)-L-arginino)succinate + AMP + diphosphate + H(+). Its pathway is amino-acid biosynthesis; L-arginine biosynthesis; L-arginine from L-ornithine and carbamoyl phosphate: step 2/3. The sequence is that of Argininosuccinate synthase from Citrobacter koseri (strain ATCC BAA-895 / CDC 4225-83 / SGSC4696).